The chain runs to 399 residues: MHNLQVRRHYAALKGFYLFAFLGTGSIIPLLSMYLTKEQHLSGSQVGLIMSLGPIVMIFFQPFWGMLSDYTQKTKGLLAVCTSITGIIGLAYIAFDSFPLFILIAACFAAFQSTIIPLSDSISLRYTQETNGNYGGIRLFGSLGFGVAVFAMGQVTNQLYPIHVIFIFGCAFLCIAAILASQVPGQQKTTKVNIRKGFRELISNKTFLIFMIITFTTFAPNLANNTYFSLFLDKSGASLSAIGILFFIGVISEIPFMRFAQTFIDKMGLLNVIMLSGGVSLFRWALYFTAPSLWIIYATVFLQGVAIGLFIPAALQYVKKITPRHVEATALTMYAAIGNGFGNWFCTFAGGYIFDYVSIFAVYLLFGILSIAGFGLTLYLMKAEKNKHTLHQPAVTFKP.

Residues 1–8 (MHNLQVRR) are Cytoplasmic-facing. Residues 9 to 35 (HYAALKGFYLFAFLGTGSIIPLLSMYL) traverse the membrane as a helical segment. Residues 36–42 (TKEQHLS) lie on the Extracellular side of the membrane. The chain crosses the membrane as a helical span at residues 43-71 (GSQVGLIMSLGPIVMIFFQPFWGMLSDYT). Residues 72 to 75 (QKTK) lie on the Cytoplasmic side of the membrane. The chain crosses the membrane as a helical span at residues 76–101 (GLLAVCTSITGIIGLAYIAFDSFPLF). Topologically, residues 102–105 (ILIA) are extracellular. Residues 106-123 (ACFAAFQSTIIPLSDSIS) form a helical membrane-spanning segment. At 124–134 (LRYTQETNGNY) the chain is on the cytoplasmic side. Residues 135–157 (GGIRLFGSLGFGVAVFAMGQVTN) traverse the membrane as a helical segment. The Extracellular segment spans residues 158–160 (QLY). A helical membrane pass occupies residues 161–180 (PIHVIFIFGCAFLCIAAILA). Over 181–210 (SQVPGQQKTTKVNIRKGFRELISNKTFLIF) the chain is Cytoplasmic. A helical membrane pass occupies residues 211-230 (MIITFTTFAPNLANNTYFSL). Topologically, residues 231–234 (FLDK) are extracellular. A helical transmembrane segment spans residues 235-259 (SGASLSAIGILFFIGVISEIPFMRF). Over 260–269 (AQTFIDKMGL) the chain is Cytoplasmic. Residues 270-289 (LNVIMLSGGVSLFRWALYFT) traverse the membrane as a helical segment. Residues 290–292 (APS) are Extracellular-facing. Residues 293 to 315 (LWIIYATVFLQGVAIGLFIPAAL) traverse the membrane as a helical segment. Over 316–327 (QYVKKITPRHVE) the chain is Cytoplasmic. Residues 328-355 (ATALTMYAAIGNGFGNWFCTFAGGYIFD) form a helical membrane-spanning segment. Over 356–358 (YVS) the chain is Extracellular. The helical transmembrane segment at 359–379 (IFAVYLLFGILSIAGFGLTLY) threads the bilayer. The Cytoplasmic portion of the chain corresponds to 380–399 (LMKAEKNKHTLHQPAVTFKP).

This sequence belongs to the major facilitator superfamily.

It localises to the cell membrane. This is an uncharacterized protein from Bacillus subtilis (strain 168).